A 439-amino-acid chain; its full sequence is tRNA modification GTPase MnmE (439 aa).

The (6S)-5-formyl-5,6,7,8-tetrahydrofolate site is built by Arg-24, Glu-81, and Lys-121. The region spanning 218-363 is the TrmE-type G domain; it reads GFKVVIAGAP…LRDLIGRVVK (146 aa). Residue Asn-228 participates in K(+) binding. GTP-binding positions include 228–233, 247–253, and 272–275; these read NAGKSS, TDIAGTT, and DTAG. Residue Ser-232 participates in Mg(2+) binding. Thr-247, Ile-249, and Thr-252 together coordinate K(+). Thr-253 is a Mg(2+) binding site. Lys-439 contacts (6S)-5-formyl-5,6,7,8-tetrahydrofolate.

It belongs to the TRAFAC class TrmE-Era-EngA-EngB-Septin-like GTPase superfamily. TrmE GTPase family. In terms of assembly, homodimer. Heterotetramer of two MnmE and two MnmG subunits. The cofactor is K(+).

The protein localises to the cytoplasm. Exhibits a very high intrinsic GTPase hydrolysis rate. Involved in the addition of a carboxymethylaminomethyl (cmnm) group at the wobble position (U34) of certain tRNAs, forming tRNA-cmnm(5)s(2)U34. In Rhizobium etli (strain CIAT 652), this protein is tRNA modification GTPase MnmE.